Here is a 462-residue protein sequence, read N- to C-terminus: MQEGKISQIIGPVVDVDFPEGQLPSILDALTITRPDGTKLVLETQQHLGEERVRTVAMESTDGLIRGLSVTNTERPIQVPVGPEVLGRMLNVVGDPIDGRGSVHTSKTYSIHRSAPKFDELSTKTEMFETGIKVIDLLEPYSRGGKTGLFGGAGVGKTVLIMELINNIAKQQSGYSVFAGVGERTREGNDLWHEMMESGVIDKTALVFGQMNEPPGARARVALTGLSIAEYFRDEENRDVLLFIDNIFRFTQAGSEVSALLGRMPSAVGYQPTLATEMGELQDRIVSTKKGSVTSVQAIYVPADDLTDPAPATAFAHLDATTVLSRSIAELGIYPAVDPLDSTSRILDPNIVGDDHYDTAQAVKQILQRYKDLQDIIAILGMDELSDEDKLVVSRARKVQRFLSQPFFVAEAFTGLAGKYVKLDETIKGFKEIIAGKHDNLPESAFYLVGTIEEAVQKAKTL.

151-158 (GGAGVGKT) provides a ligand contact to ATP.

Belongs to the ATPase alpha/beta chains family. In terms of assembly, F-type ATPases have 2 components, CF(1) - the catalytic core - and CF(0) - the membrane proton channel. CF(1) has five subunits: alpha(3), beta(3), gamma(1), delta(1), epsilon(1). CF(0) has four main subunits: a(1), b(1), b'(1) and c(9-12).

The protein localises to the cell inner membrane. It carries out the reaction ATP + H2O + 4 H(+)(in) = ADP + phosphate + 5 H(+)(out). Produces ATP from ADP in the presence of a proton gradient across the membrane. The catalytic sites are hosted primarily by the beta subunits. The polypeptide is ATP synthase subunit beta (Chlorobium phaeobacteroides (strain DSM 266 / SMG 266 / 2430)).